A 211-amino-acid chain; its full sequence is Ferric nitrobindin-like protein (211 aa).

The GXWXGXG signature appears at 21-27; it reads GRWRGPG. Positions 104–130 are disordered; the sequence is GVVQEGSDTRTEPGGAEPDPAGRRAPS.

It belongs to the nitrobindin family.

The chain is Ferric nitrobindin-like protein from Beutenbergia cavernae (strain ATCC BAA-8 / DSM 12333 / CCUG 43141 / JCM 11478 / NBRC 16432 / NCIMB 13614 / HKI 0122).